Consider the following 202-residue polypeptide: Holliday junction resolvase RecU (202 aa).

Residues Thr-85, Asp-87, Glu-100, and Gln-119 each coordinate Mg(2+).

It belongs to the RecU family. It depends on Mg(2+) as a cofactor.

The protein localises to the cytoplasm. It carries out the reaction Endonucleolytic cleavage at a junction such as a reciprocal single-stranded crossover between two homologous DNA duplexes (Holliday junction).. Endonuclease that resolves Holliday junction intermediates in genetic recombination. Cleaves mobile four-strand junctions by introducing symmetrical nicks in paired strands. Promotes annealing of linear ssDNA with homologous dsDNA. Required for DNA repair, homologous recombination and chromosome segregation. In Streptococcus uberis (strain ATCC BAA-854 / 0140J), this protein is Holliday junction resolvase RecU.